Here is a 213-residue protein sequence, read N- to C-terminus: Small ribosomal subunit protein uS5 (213 aa).

Residues 1-41 (MSGRERNGGRSAENNDKKERNERNGRNDRGGRNDRRNQQDE) are disordered. The region spanning 45–108 (FIERVVTINR…EEARKNFFRV (64 aa)) is the S5 DRBM domain.

The protein belongs to the universal ribosomal protein uS5 family. As to quaternary structure, part of the 30S ribosomal subunit. Contacts proteins S4 and S8.

Functionally, with S4 and S12 plays an important role in translational accuracy. In terms of biological role, located at the back of the 30S subunit body where it stabilizes the conformation of the head with respect to the body. The protein is Small ribosomal subunit protein uS5 of Corynebacterium jeikeium (strain K411).